We begin with the raw amino-acid sequence, 869 residues long: Leucine--tRNA ligase (869 aa).

The 'HIGH' region signature appears at 42–52 (PYPSGNLHMGH). The 'KMSKS' region signature appears at 622–626 (KMSKS). Lys625 provides a ligand contact to ATP.

This sequence belongs to the class-I aminoacyl-tRNA synthetase family.

It is found in the cytoplasm. It carries out the reaction tRNA(Leu) + L-leucine + ATP = L-leucyl-tRNA(Leu) + AMP + diphosphate. The polypeptide is Leucine--tRNA ligase (Synechocystis sp. (strain ATCC 27184 / PCC 6803 / Kazusa)).